The primary structure comprises 302 residues: Sulfate adenylyltransferase subunit 2 (302 aa).

This sequence belongs to the PAPS reductase family. CysD subfamily. In terms of assembly, heterodimer composed of CysD, the smaller subunit, and CysN.

It carries out the reaction sulfate + ATP + H(+) = adenosine 5'-phosphosulfate + diphosphate. Its pathway is sulfur metabolism; hydrogen sulfide biosynthesis; sulfite from sulfate: step 1/3. Its function is as follows. With CysN forms the ATP sulfurylase (ATPS) that catalyzes the adenylation of sulfate producing adenosine 5'-phosphosulfate (APS) and diphosphate, the first enzymatic step in sulfur assimilation pathway. APS synthesis involves the formation of a high-energy phosphoric-sulfuric acid anhydride bond driven by GTP hydrolysis by CysN coupled to ATP hydrolysis by CysD. The sequence is that of Sulfate adenylyltransferase subunit 2 from Bacteroides thetaiotaomicron (strain ATCC 29148 / DSM 2079 / JCM 5827 / CCUG 10774 / NCTC 10582 / VPI-5482 / E50).